The sequence spans 288 residues: Ankyrin repeat and SOCS box protein 8 (288 aa).

At serine 17 the chain carries Phosphoserine. 4 ANK repeats span residues 52–81 (GTLKPLHCACMVSDADCVELLLEKGAEVNA), 85–113 (YNRTALHYAAERDEACVEVLLEYGANPNA), 117–146 (NRDTPLHWAAFKNNAECVRALLESGASVNA), and 150–179 (NNDTPLSWAAMKGNLESVSILLDYGAEVRV). The region spanning 235–288 (QLCEKLTVLCSAPGTLKTLARYAVRRSLGLQYLPDAVKGLPLPVSLKDYLLLLE) is the SOCS box domain.

The protein belongs to the ankyrin SOCS box (ASB) family. In terms of assembly, interacts with TBK1; this interaction promotes TBK1 proteasomal degradation. Phosphorylated by TBK1.

The protein resides in the cytoplasm. It functions in the pathway protein modification; protein ubiquitination. Functionally, may be a substrate-recognition component of a SCF-like ECS (Elongin-Cullin-SOCS-box protein) E3 ubiquitin-protein ligase complex which mediates the ubiquitination and subsequent proteasomal degradation of target proteins. Inhibits IFN-beta production through the IRF3 signaling pathway by targeting TBK1 via 'Lys-48'-linked ubiquitination, leading to its proteasomal degradation. The chain is Ankyrin repeat and SOCS box protein 8 (Asb8) from Mus musculus (Mouse).